Here is a 322-residue protein sequence, read N- to C-terminus: Mas-related G-protein coupled receptor member X1 (322 aa).

Residues methionine 1 to serine 30 are Extracellular-facing. N-linked (GlcNAc...) asparagine glycosylation is present at asparagine 16. A helical transmembrane segment spans residues phenylalanine 31–leucine 51. The Cytoplasmic portion of the chain corresponds to glycine 52–alanine 59. The helical transmembrane segment at isoleucine 60–isoleucine 80 threads the bilayer. Residues aspartate 81–aspartate 100 are Extracellular-facing. The helical transmembrane segment at isoleucine 101–serine 121 threads the bilayer. Residues threonine 122–methionine 142 are Cytoplasmic-facing. Residues serine 143–phenylalanine 163 traverse the membrane as a helical segment. The Extracellular portion of the chain corresponds to serine 164–aspartate 179. A helical membrane pass occupies residues phenylalanine 180–leucine 200. The Cytoplasmic segment spans residues leucine 201 to threonine 223. Residues valine 224–phenylalanine 244 form a helical membrane-spanning segment. Residues glycine 245–glutamine 257 lie on the Extracellular side of the membrane. The chain crosses the membrane as a helical span at residues valine 258–glycine 278. Residues serine 279–tyrosine 322 lie on the Cytoplasmic side of the membrane.

Belongs to the G-protein coupled receptor 1 family. Mas subfamily. Expressed in a subset of IB4-positive small diameter nociceptive dorsal root neurons.

Its subcellular location is the cell membrane. Its function is as follows. Orphan receptor activated by neuropeptides terminating in Arg-Phe or Arg-Phe-amide. Mediates its action by association with G proteins that activate a phosphatidylinositol-calcium second messenger system. Its effect is mediated by G(q) and G(11) proteins. May regulate the function of nociceptive neurons by modulation of pain perception. This is Mas-related G-protein coupled receptor member X1 from Mus musculus (Mouse).